We begin with the raw amino-acid sequence, 476 residues long: Aspartyl/glutamyl-tRNA(Asn/Gln) amidotransferase subunit B (476 aa).

It belongs to the GatB/GatE family. GatB subfamily. In terms of assembly, heterotrimer of A, B and C subunits.

The catalysed reaction is L-glutamyl-tRNA(Gln) + L-glutamine + ATP + H2O = L-glutaminyl-tRNA(Gln) + L-glutamate + ADP + phosphate + H(+). It catalyses the reaction L-aspartyl-tRNA(Asn) + L-glutamine + ATP + H2O = L-asparaginyl-tRNA(Asn) + L-glutamate + ADP + phosphate + 2 H(+). Functionally, allows the formation of correctly charged Asn-tRNA(Asn) or Gln-tRNA(Gln) through the transamidation of misacylated Asp-tRNA(Asn) or Glu-tRNA(Gln) in organisms which lack either or both of asparaginyl-tRNA or glutaminyl-tRNA synthetases. The reaction takes place in the presence of glutamine and ATP through an activated phospho-Asp-tRNA(Asn) or phospho-Glu-tRNA(Gln). The sequence is that of Aspartyl/glutamyl-tRNA(Asn/Gln) amidotransferase subunit B from Moorella thermoacetica (strain ATCC 39073 / JCM 9320).